The following is a 159-amino-acid chain: MTHIRAIYTDGACEGNPGPGGWGVVIYFTDGSVHELGGHHPATTNNRMELQAAIEALKAWRQLAPGSAIALYTDSEYVLRGITEWIHHWKRRGWKTAAKKPVLNQDLWQELDALNDPLVQWHHVRGHRGDVGNERCDLIARRLSRGQPIALRTLPPPLG.

The RNase H type-1 domain occupies 1 to 145 (MTHIRAIYTD…CDLIARRLSR (145 aa)). Residues aspartate 10, glutamate 49, aspartate 74, and aspartate 137 each coordinate Mg(2+).

This sequence belongs to the RNase H family. In terms of assembly, monomer. Mg(2+) is required as a cofactor.

The protein localises to the cytoplasm. The enzyme catalyses Endonucleolytic cleavage to 5'-phosphomonoester.. In terms of biological role, endonuclease that specifically degrades the RNA of RNA-DNA hybrids. This Thermosynechococcus vestitus (strain NIES-2133 / IAM M-273 / BP-1) protein is Ribonuclease H.